A 278-amino-acid chain; its full sequence is Rhomboid protease GlpG (278 aa).

A run of 6 helical transmembrane segments spans residues 94–114 (AGPL…LMLI), 143–163 (AFLH…WYLG), 175–195 (LLVL…LFSG), 196–216 (ANFG…WLTG), 224–241 (ISLP…LIAG), and 245–267 (ILGL…LMAF). The active-site Nucleophile is the Ser202. His255 is an active-site residue.

It belongs to the peptidase S54 family.

It localises to the cell inner membrane. The catalysed reaction is Cleaves type-1 transmembrane domains using a catalytic dyad composed of serine and histidine that are contributed by different transmembrane domains.. In terms of biological role, rhomboid-type serine protease that catalyzes intramembrane proteolysis. This is Rhomboid protease GlpG from Yersinia pestis bv. Antiqua (strain Antiqua).